Here is a 187-residue protein sequence, read N- to C-terminus: Large ribosomal subunit protein uL18 (187 aa).

This sequence belongs to the universal ribosomal protein uL18 family. Part of the 50S ribosomal subunit. Interacts with proteins L5 and L21e, and attaches the 5S rRNA to the 23S rRNA. Has been cross-linked to L21e.

This is one of 5 proteins that mediate the attachment of the 5S rRNA onto the large ribosomal subunit, where it forms part of the central protuberance and stabilizes the orientation of adjacent RNA domains. This Haloarcula marismortui (strain ATCC 43049 / DSM 3752 / JCM 8966 / VKM B-1809) (Halobacterium marismortui) protein is Large ribosomal subunit protein uL18 (rpl18).